Consider the following 202-residue polypeptide: MANLLFALAAYLIGSVSFAVVVSKLMGLPDPHSYGSGNPGATNVLRTGNKKAAILTLIGDALKGWLAVWLAARFGPAHGLNDTGLAMVALAVFLGHLFPVFHRFAGGKGVATAAGILLAIDPILGLGTLATWLIIAFFFRYSSLAALVAAIFAPFFHVLMNGVDVMAGAIFVISVLLIARHRQNIAKLLAGKESRIGEKKKV.

Helical transmembrane passes span 2 to 22 (ANLL…AVVV), 82 to 102 (DTGL…PVFH), 119 to 139 (AIDP…AFFF), and 158 to 178 (VLMN…VLLI).

The protein belongs to the PlsY family. As to quaternary structure, probably interacts with PlsX.

The protein localises to the cell inner membrane. It catalyses the reaction an acyl phosphate + sn-glycerol 3-phosphate = a 1-acyl-sn-glycero-3-phosphate + phosphate. It functions in the pathway lipid metabolism; phospholipid metabolism. In terms of biological role, catalyzes the transfer of an acyl group from acyl-phosphate (acyl-PO(4)) to glycerol-3-phosphate (G3P) to form lysophosphatidic acid (LPA). This enzyme utilizes acyl-phosphate as fatty acyl donor, but not acyl-CoA or acyl-ACP. In Cupriavidus taiwanensis (strain DSM 17343 / BCRC 17206 / CCUG 44338 / CIP 107171 / LMG 19424 / R1) (Ralstonia taiwanensis (strain LMG 19424)), this protein is Glycerol-3-phosphate acyltransferase.